Consider the following 82-residue polypeptide: Small ribosomal subunit protein uS17 (82 aa).

It belongs to the universal ribosomal protein uS17 family. Part of the 30S ribosomal subunit.

Functionally, one of the primary rRNA binding proteins, it binds specifically to the 5'-end of 16S ribosomal RNA. In Rickettsia rickettsii (strain Iowa), this protein is Small ribosomal subunit protein uS17.